Consider the following 82-residue polypeptide: Small ribosomal subunit protein uS17 (82 aa).

This sequence belongs to the universal ribosomal protein uS17 family. Part of the 30S ribosomal subunit.

In terms of biological role, one of the primary rRNA binding proteins, it binds specifically to the 5'-end of 16S ribosomal RNA. The polypeptide is Small ribosomal subunit protein uS17 (Shewanella sp. (strain W3-18-1)).